The following is an 854-amino-acid chain: Metastasis-associated in colon cancer protein 1 (854 aa).

S19 carries the phosphoserine modification. The 138-residue stretch at 212-349 folds into the ZU5 domain; that stretch reads VTKACKVNHQ…LSQVMYLVVA (138 aa). An SH3 domain is found at 549–619; sequence NFTNYGVTLK…HCKNVKVISK (71 aa).

In terms of assembly, interacts with FASLG.

It localises to the cytoplasm. Its subcellular location is the nucleus. Functionally, acts as a transcription activator for MET and as a key regulator of HGF-MET signaling. The sequence is that of Metastasis-associated in colon cancer protein 1 (MACC1) from Pongo abelii (Sumatran orangutan).